The following is a 107-amino-acid chain: Dispanin subfamily A member 2b (107 aa).

Over methionine 1–serine 31 the chain is Extracellular. A helical transmembrane segment spans residues isoleucine 32–valine 52. Residues cysteine 41 and cysteine 42 are each lipidated (S-palmitoyl cysteine). Topologically, residues lysine 53–asparagine 77 are cytoplasmic. A helical transmembrane segment spans residues isoleucine 78–glycine 98. Over threonine 99 to glycine 107 the chain is Extracellular.

The protein belongs to the CD225/Dispanin family. In terms of tissue distribution, expressed various cell types in torpedo electric organ and muscle, especially fibroblasts, capillary endothelial cells, and axonal cuff cells.

It is found in the cell membrane. This is Dispanin subfamily A member 2b from Torpedo marmorata (Marbled electric ray).